A 349-amino-acid chain; its full sequence is MSQMENSTKKVESVANVEVVTTENAKVEQKPTSPADAIQLKVNANSTIKNLKTLVSIVKLTESGAHIGLNPKKWNPKMASYIHAKRSNNHVIDILKTILFLDRAYKFLQEVSQNGGTVMFVGTRGRVVKELIKAEAERTNSFYVTQRWLGGTLTNFTNISRSLKKFNSNLALLESEEINKYSKKEQIAINKETAKLEKFYGGIKNMKQRPDVLILVDPVNDVNAIKEARKLNIPVIALANTNADPQLIDYIIPVNNYSVKSITLILGVLADSIAELHGEPTKIVGRPDSEIVLPETKSNWKQNNYDPSKRGYNPKYVNHKSTFNKFNNKKPVDSTTNEIKTNVIKAETK.

The segment at 302–334 (QNNYDPSKRGYNPKYVNHKSTFNKFNNKKPVDS) is disordered.

It belongs to the universal ribosomal protein uS2 family.

This chain is Small ribosomal subunit protein uS2, found in Ureaplasma parvum serovar 3 (strain ATCC 27815 / 27 / NCTC 11736).